A 356-amino-acid chain; its full sequence is Heat-inducible transcription repressor HrcA (356 aa).

The protein belongs to the HrcA family.

Negative regulator of class I heat shock genes (grpE-dnaK-dnaJ and groELS operons). Prevents heat-shock induction of these operons. The protein is Heat-inducible transcription repressor HrcA of Bartonella quintana (strain Toulouse) (Rochalimaea quintana).